A 368-amino-acid polypeptide reads, in one-letter code: Spore germination protein B2 (368 aa).

The next 10 membrane-spanning stretches (helical) occupy residues 10–30, 43–63, 82–102, 120–140, 145–165, 187–207, 217–237, 282–302, 308–328, and 338–358; these read FMQTLIMISSTLIGAGVLTLP, LMILLQGVIFIIIVLLFLPFL, FIGFLLNLYICLYFIGIVCFQ, MAVVVFIFLAVAIYHVGGGVY, VYAYIFPITLIIFMMLLMFSF, LFPKTLLYFSGFEIIFYLVPF, AVALGIATSTLFYSITLLIVI, FACMLGSFKGAHIGLTEIFHL, AWLLTAMLAATFFITMYPKDL, and LGYAFLIVITIPFFVWFLSWI.

This sequence belongs to the amino acid-polyamine-organocation (APC) superfamily. Spore germination protein (SGP) (TC 2.A.3.9) family.

It is found in the cell membrane. In terms of biological role, involved in the response to the germinative mixture of L-asparagine, glucose, fructose and potassium ions (AGFK). Could be an amino acid transporter. Cannot stimulate germination in the absence of gerD and gerK gene products (fructose and glucose receptors, respectively). This chain is Spore germination protein B2 (gerBB), found in Bacillus subtilis (strain 168).